The chain runs to 352 residues: Histidinol-phosphate aminotransferase (352 aa).

Lys211 is subject to N6-(pyridoxal phosphate)lysine.

This sequence belongs to the class-II pyridoxal-phosphate-dependent aminotransferase family. Histidinol-phosphate aminotransferase subfamily. In terms of assembly, homodimer. Pyridoxal 5'-phosphate is required as a cofactor.

The enzyme catalyses L-histidinol phosphate + 2-oxoglutarate = 3-(imidazol-4-yl)-2-oxopropyl phosphate + L-glutamate. It participates in amino-acid biosynthesis; L-histidine biosynthesis; L-histidine from 5-phospho-alpha-D-ribose 1-diphosphate: step 7/9. The sequence is that of Histidinol-phosphate aminotransferase from Haemophilus influenzae (strain PittGG).